Reading from the N-terminus, the 174-residue chain is Photosystem II repair protein PSB27-H1, chloroplastic (174 aa).

The interval 1 to 35 (MASASATATLLKPNLPPHKPTIIASSVSPPLPPPR) is disordered. The residue at position 94 (threonine 94) is a Phosphothreonine. Tyrosine 132 carries the phosphotyrosine modification.

Belongs to the Psb27 family.

It is found in the plastid. The protein resides in the chloroplast thylakoid membrane. Probably involved in repair of photodamaged photosystem II (PSII). The sequence is that of Photosystem II repair protein PSB27-H1, chloroplastic (PSB27-1) from Arabidopsis thaliana (Mouse-ear cress).